The sequence spans 158 residues: Leptin-B (158 aa).

Residues 1–19 form the signal peptide; that stretch reads MYMPLALVYASFLTLPAST. A disulfide bridge links Cys-114 with Cys-158.

It belongs to the leptin family. Highly expressed in the brain and eye. Expressed at low levels in muscle and skin.

It is found in the secreted. May function as part of a signaling pathway that acts to regulate the size of the body fat depot. The protein is Leptin-B of Oryzias latipes (Japanese rice fish).